Reading from the N-terminus, the 276-residue chain is Large ribosomal subunit protein uL2 (276 aa).

The segment at 224-276 is disordered; it reads AMNPIDHPHGGGEGKTSGGRNPVTPWGVPTKGKKTRKRNKSSNKYIKRVSDKG. Positions 254–270 are enriched in basic residues; that stretch reads KGKKTRKRNKSSNKYIK.

Belongs to the universal ribosomal protein uL2 family. As to quaternary structure, part of the 50S ribosomal subunit. Forms a bridge to the 30S subunit in the 70S ribosome.

One of the primary rRNA binding proteins. Required for association of the 30S and 50S subunits to form the 70S ribosome, for tRNA binding and peptide bond formation. It has been suggested to have peptidyltransferase activity; this is somewhat controversial. Makes several contacts with the 16S rRNA in the 70S ribosome. In Ehrlichia canis (strain Jake), this protein is Large ribosomal subunit protein uL2.